Reading from the N-terminus, the 97-residue chain is Co-chaperonin GroES (97 aa).

This sequence belongs to the GroES chaperonin family. Heptamer of 7 subunits arranged in a ring. Interacts with the chaperonin GroEL.

Its subcellular location is the cytoplasm. In terms of biological role, together with the chaperonin GroEL, plays an essential role in assisting protein folding. The GroEL-GroES system forms a nano-cage that allows encapsulation of the non-native substrate proteins and provides a physical environment optimized to promote and accelerate protein folding. GroES binds to the apical surface of the GroEL ring, thereby capping the opening of the GroEL channel. This chain is Co-chaperonin GroES, found in Stutzerimonas stutzeri (strain A1501) (Pseudomonas stutzeri).